We begin with the raw amino-acid sequence, 89 residues long: Small ribosomal subunit protein bS16c (89 aa).

This sequence belongs to the bacterial ribosomal protein bS16 family.

The protein localises to the plastid. The protein resides in the chloroplast. In Glycine max (Soybean), this protein is Small ribosomal subunit protein bS16c.